The primary structure comprises 353 residues: MSEPLKPRIDFAEPLKEEPTSAFKAQQTFSEAESRTFAPAAIDERPEDEGVAEAAVDAALRPKRSLWRKMVMGGLALFGASVVGQGVQWTMNAWQTQDWVALGGCAAGALIIGAGVGSVVTEWRRLWRLRQRAHERDEARELLHSHSVGKGRAFCEKLAQQAGIDQSHPALQRWYAAIHETQNDREIVGLYAHLVQPVLDAQARREISRFAAESTLMIAVSPLALVDMAFIAWRNLRLINRIATLYGIELGYYSRLRLFRLVLLNIAFAGASELVREVGMDWMSQDLAARLSTRAAQGIGAGLLTARLGIKAMELCRPLPWIDNDKPRLGDFRRQLIGQLKETLQKSKSSPEK.

Basic and acidic residues predominate over residues 1-19; the sequence is MSEPLKPRIDFAEPLKEEP. Residues 1–35 are disordered; that stretch reads MSEPLKPRIDFAEPLKEEPTSAFKAQQTFSEAESR. Transmembrane regions (helical) follow at residues 70–90, 100–120, and 213–233; these read MVMG…VQWT, VALG…GSVV, and ESTL…FIAW.

It belongs to the UPF0283 family.

The protein resides in the cell inner membrane. In Salmonella paratyphi C (strain RKS4594), this protein is UPF0283 membrane protein YcjF.